The following is a 395-amino-acid chain: Ribosomal RNA large subunit methyltransferase G (395 aa).

It belongs to the methyltransferase superfamily. RlmG family.

The protein localises to the cytoplasm. The catalysed reaction is guanosine(1835) in 23S rRNA + S-adenosyl-L-methionine = N(2)-methylguanosine(1835) in 23S rRNA + S-adenosyl-L-homocysteine + H(+). Functionally, specifically methylates the guanine in position 1835 (m2G1835) of 23S rRNA. The polypeptide is Ribosomal RNA large subunit methyltransferase G (Yersinia pestis (strain Pestoides F)).